Here is a 425-residue protein sequence, read N- to C-terminus: Glutamyl-tRNA reductase (425 aa).

Substrate is bound by residues 49 to 52 (TCNR), Ser107, 112 to 114 (EPQ), and Gln118. The Nucleophile role is filled by Cys50. 187–192 (GAGETI) is a binding site for NADP(+).

This sequence belongs to the glutamyl-tRNA reductase family. In terms of assembly, homodimer.

The enzyme catalyses (S)-4-amino-5-oxopentanoate + tRNA(Glu) + NADP(+) = L-glutamyl-tRNA(Glu) + NADPH + H(+). Its pathway is porphyrin-containing compound metabolism; protoporphyrin-IX biosynthesis; 5-aminolevulinate from L-glutamyl-tRNA(Glu): step 1/2. In terms of biological role, catalyzes the NADPH-dependent reduction of glutamyl-tRNA(Glu) to glutamate 1-semialdehyde (GSA). The protein is Glutamyl-tRNA reductase of Pseudomonas syringae pv. syringae (strain B728a).